Here is a 196-residue protein sequence, read N- to C-terminus: ATP-dependent Clp protease proteolytic subunit (196 aa).

The active-site Nucleophile is Ser101. Residue His126 is part of the active site.

The protein belongs to the peptidase S14 family. As to quaternary structure, component of the chloroplastic Clp protease core complex.

The protein localises to the plastid. The protein resides in the chloroplast stroma. The catalysed reaction is Hydrolysis of proteins to small peptides in the presence of ATP and magnesium. alpha-casein is the usual test substrate. In the absence of ATP, only oligopeptides shorter than five residues are hydrolyzed (such as succinyl-Leu-Tyr-|-NHMec, and Leu-Tyr-Leu-|-Tyr-Trp, in which cleavage of the -Tyr-|-Leu- and -Tyr-|-Trp bonds also occurs).. Cleaves peptides in various proteins in a process that requires ATP hydrolysis. Has a chymotrypsin-like activity. Plays a major role in the degradation of misfolded proteins. The sequence is that of ATP-dependent Clp protease proteolytic subunit from Lotus japonicus (Lotus corniculatus var. japonicus).